The sequence spans 250 residues: UPF0246 protein cce_3295 (250 aa).

It belongs to the UPF0246 family.

The chain is UPF0246 protein cce_3295 from Crocosphaera subtropica (strain ATCC 51142 / BH68) (Cyanothece sp. (strain ATCC 51142)).